The sequence spans 141 residues: Large ribosomal subunit protein uL11 (141 aa).

Belongs to the universal ribosomal protein uL11 family. As to quaternary structure, part of the ribosomal stalk of the 50S ribosomal subunit. Interacts with L10 and the large rRNA to form the base of the stalk. L10 forms an elongated spine to which L12 dimers bind in a sequential fashion forming a multimeric L10(L12)X complex. One or more lysine residues are methylated.

In terms of biological role, forms part of the ribosomal stalk which helps the ribosome interact with GTP-bound translation factors. The sequence is that of Large ribosomal subunit protein uL11 from Prochlorococcus marinus (strain MIT 9215).